A 261-amino-acid chain; its full sequence is Transmembrane and immunoglobulin domain-containing protein 1 (261 aa).

Residues methionine 1–threonine 27 form the signal peptide. Residues serine 28 to serine 114 form the Ig-like C2-type 1 domain. The Extracellular segment spans residues serine 28–proline 219. Cysteines 54 and 103 form a disulfide. 4 N-linked (GlcNAc...) asparagine glycosylation sites follow: asparagine 83, asparagine 108, asparagine 118, and asparagine 189. In terms of domain architecture, Ig-like C2-type 2 spans proline 122–histidine 208. Cysteines 143 and 194 form a disulfide. A helical membrane pass occupies residues isoleucine 220 to alanine 240. Residues arginine 241 to leucine 261 are Cytoplasmic-facing.

As to quaternary structure, homodimer. Post-translationally, N-glycosylated.

It is found in the cell membrane. Its subcellular location is the cytoplasm. Its function is as follows. May control cell-cell adhesion, cell migration and proliferation, cell morphology, and protects renal epithelial cells from oxidative cell injury to promote cell survival. This chain is Transmembrane and immunoglobulin domain-containing protein 1, found in Bos taurus (Bovine).